Here is a 332-residue protein sequence, read N- to C-terminus: Glycine betaine-binding periplasmic protein OusX (332 aa).

The signal sequence occupies residues 1-21 (MRNISMATLALTTVLSTGLFA).

As to quaternary structure, the complex is composed of two ATP-binding proteins (OusV), two transmembrane proteins (OusW) and a solute-binding protein (OusX).

The protein localises to the periplasm. Part of the OusB ABC transporter complex involved in glycine betaine and choline uptake. Binds glycine betaine. This is Glycine betaine-binding periplasmic protein OusX from Dickeya dadantii (strain 3937) (Erwinia chrysanthemi (strain 3937)).